The primary structure comprises 388 residues: MVLSLLSVMLLSGYKFLSKKEELVTILPLPQVENKFKPQKIWSYYIGSNNGGGDFYSNLQPTVQNTRVFVANRYGLVKALDADSGKELWAKDLSIYTGCFSRNRPAQLSGGVTAVGNRIYVASELAKVYAMEAKCGSLAWEVLVAGETLSPPVVSDGVILIHTSNGMLQALNEADGALKWTVNLEAKMLNIRGGSTPTTACGTAIVGSDNGLVSAVMLNIGQIIWQQRISQTGGVTEIARINDVQATPVVVNGYVYALAYNGNLAALDLFSGKLMWSREIGSFTNMLVENGIIYLVDQNDRVIAVDAKNGITSWYQSALLHRNLTSPVLNKDSIVIGDSGGYLHWINIDDGRLVAQKKIASALLVTPLFDGDKIIVQATNGEVHAIIR.

An N-terminal signal peptide occupies residues 1–17 (MVLSLLSVMLLSGYKFL).

The protein belongs to the BamB family. As to quaternary structure, part of the Bam complex, which is composed of the outer membrane protein BamA, and four lipoproteins BamB, BamC, BamD and BamE.

It is found in the cell outer membrane. Its function is as follows. Part of the outer membrane protein assembly complex, which is involved in assembly and insertion of beta-barrel proteins into the outer membrane. The protein is Outer membrane protein assembly factor BamB of Moranella endobia (strain PCIT).